The chain runs to 1013 residues: Ephrin type-B receptor 6 (1013 aa).

The N-terminal stretch at Met-1–Ala-31 is a signal peptide. Residues Leu-32–Gly-590 are Extracellular-facing. The 199-residue stretch at Glu-33–Arg-231 folds into the Eph LBD domain. 2 Fibronectin type-III domains span residues Pro-363–Glu-478 and Val-479–Gln-574. Asn-472 is a glycosylation site (N-linked (GlcNAc...) asparagine). The helical transmembrane segment at Ser-591 to Phe-611 threads the bilayer. The Cytoplasmic portion of the chain corresponds to Gln-612 to Val-1013. The 250-residue stretch at Ile-662 to Ile-911 folds into the Protein kinase domain. Ile-668–Val-676 serves as a coordination point for ATP. The 65-residue stretch at Pro-940 to His-1004 folds into the SAM domain. Positions Val-1011–Val-1013 match the PDZ-binding motif.

Belongs to the protein kinase superfamily. Tyr protein kinase family. Ephrin receptor subfamily. Interacts with CBL and EPHB1. Interacts with FYN; this interaction takes place in a ligand-independent manner. In terms of processing, ligand-binding increases phosphorylation on tyrosine residues. Phosphorylation on tyrosine residues is mediated by transphosphorylation by the catalytically active EPHB1 in a ligand-independent manner. Tyrosine phosphorylation of the receptor may act as a switch on the functional transition from cell adhesion/attraction to de-adhesion/repulsion.

It is found in the membrane. Functionally, kinase-defective receptor for members of the ephrin-B family. Binds to ephrin-B1 and ephrin-B2. Modulates cell adhesion and migration by exerting both positive and negative effects upon stimulation with ephrin-B2. Inhibits JNK activation, T-cell receptor-induced IL-2 secretion and CD25 expression upon stimulation with ephrin-B2. This is Ephrin type-B receptor 6 (Ephb6) from Rattus norvegicus (Rat).